The primary structure comprises 84 residues: Serine protease inhibitor Kazal-type 2 (84 aa).

Positions 1 to 23 (MALSVLRLALLLLAVTFAASLIP) are cleaved as a signal peptide. Gln24 is subject to Pyrrolidone carboxylic acid. The Kazal-like domain maps to 30–84 (KYRTPNCSQYRLPGCPRHFNPVCGSDMSTYANECTLCMKIREGGHNIKIIRNGPC). 3 disulfides stabilise this stretch: Cys36/Cys66, Cys44/Cys63, and Cys52/Cys84.

As to expression, expressed in epididymis (at protein level).

Its subcellular location is the secreted. The protein localises to the cytoplasmic vesicle. The protein resides in the secretory vesicle. It is found in the acrosome. As a strong inhibitor of acrosin, it is required for normal spermiogenesis. It probably hinders premature activation of proacrosin and other proteases, thus preventing the cascade of events leading to spermiogenesis defects. May be involved in the regulation of serine protease-dependent germ cell apoptosis. It also inhibits trypsin. This is Serine protease inhibitor Kazal-type 2 (SPINK2) from Homo sapiens (Human).